The chain runs to 319 residues: Lipoyl synthase (319 aa).

[4Fe-4S] cluster-binding residues include Cys-61, Cys-66, Cys-72, Cys-87, Cys-91, Cys-94, and Ser-300. A Radical SAM core domain is found at 73-289; sequence WDKKHATFMI…ESVAYSKGFL (217 aa).

It belongs to the radical SAM superfamily. Lipoyl synthase family. The cofactor is [4Fe-4S] cluster.

The protein resides in the cytoplasm. The enzyme catalyses [[Fe-S] cluster scaffold protein carrying a second [4Fe-4S](2+) cluster] + N(6)-octanoyl-L-lysyl-[protein] + 2 oxidized [2Fe-2S]-[ferredoxin] + 2 S-adenosyl-L-methionine + 4 H(+) = [[Fe-S] cluster scaffold protein] + N(6)-[(R)-dihydrolipoyl]-L-lysyl-[protein] + 4 Fe(3+) + 2 hydrogen sulfide + 2 5'-deoxyadenosine + 2 L-methionine + 2 reduced [2Fe-2S]-[ferredoxin]. It functions in the pathway protein modification; protein lipoylation via endogenous pathway; protein N(6)-(lipoyl)lysine from octanoyl-[acyl-carrier-protein]: step 2/2. In terms of biological role, catalyzes the radical-mediated insertion of two sulfur atoms into the C-6 and C-8 positions of the octanoyl moiety bound to the lipoyl domains of lipoate-dependent enzymes, thereby converting the octanoylated domains into lipoylated derivatives. The chain is Lipoyl synthase from Rhodopseudomonas palustris (strain BisB18).